The chain runs to 513 residues: ATP synthase subunit alpha (513 aa).

169-176 (GDRQTGKT) contributes to the ATP binding site.

Belongs to the ATPase alpha/beta chains family. F-type ATPases have 2 components, CF(1) - the catalytic core - and CF(0) - the membrane proton channel. CF(1) has five subunits: alpha(3), beta(3), gamma(1), delta(1), epsilon(1). CF(0) has three main subunits: a(1), b(2) and c(9-12). The alpha and beta chains form an alternating ring which encloses part of the gamma chain. CF(1) is attached to CF(0) by a central stalk formed by the gamma and epsilon chains, while a peripheral stalk is formed by the delta and b chains.

The protein localises to the cell inner membrane. The enzyme catalyses ATP + H2O + 4 H(+)(in) = ADP + phosphate + 5 H(+)(out). Functionally, produces ATP from ADP in the presence of a proton gradient across the membrane. The alpha chain is a regulatory subunit. The chain is ATP synthase subunit alpha from Shewanella loihica (strain ATCC BAA-1088 / PV-4).